The primary structure comprises 1227 residues: MSSSPSPFGQNEWLVEEMYRKFRDDPSSVDPSWHEFLVDYSPEPTTDSASNGRTTTAAPVTPPTPAPAPAPEPKAAPKPAAKTEAKPAKPAKSATPAKGDESQILRGAAAAVVKNMNASLEVPTATSVRAIPAKLMIDNRVVINNHLKRTRGGKISFTHLLGYAIVQAVKKFPNMNRHFAVVDGKPTAITPAHTNLGLAIDLQGKDGNRSLVVAAIKRCETMRFGQFIAAYEDIVRRARDGKLTAEDFSGVTISLTNPGTLGTVHSVPRLMQGQGAIIGAGAMEYPAEFQGASEERIADLGIGKLITLTSTYDHRIIQGAESGDFLRTIHQLLLDDDFFDEIFRELGIPYEPVRWRTDNPDSIEDKNARVIELIAAYRNRGHLMADIDPLRLDNTRFRSHPDLDVNSHGLTLWDLDREFKVDGFAGVQRKKLRDILSVLRDAYCRHVGVEYTHILEPEQQRWIQERVETKHDKPTVAEQKYILSKLNAAEAFETFLQTKYVGQKRFSLEGAETVIPMMDAVIDQCAEHGLDEVVIAMPHRGRLNVLANIVGKPYSQIFSEFEGNLNPSQAHGSGDVKYHLGATGTYIQMFGDNDIEVSLTANPSHLEAVDPVLEGLVRAKQDLLDTGEEGSDNRFSVVPLMLHGDAAFAGQGVVAETLNLALLRGYRTGGTIHIVVNNQIGFTTAPTDSRSSEYCTDVAKMIGAPIFHVNGDDPEACAWVARLAVDFRQAFKKDVVIDMLCYRRRGHNEGDDPSMTQPYMYDVIDTKRGSRKAYTEALIGRGDISMKEAEDALRDYQGQLERVFNEVRELEKHEIEPSESVEADQQIPSKLATAVDKAMLQRIGDAHLALPEGFTVHPRVRPVLEKRREMAYEGRIDWAFAELLALGSLIAEGKLVRLSGQDTQRGTFTQRHAVIVDRKTGEEFTPLQLLATNPDGTPTGGKFLVYNSALSEFAAVGFEYGYSVGNPDAMVLWEAQFGDFVNGAQSIIDEFISSGEAKWGQLSDVVLLLPHGHEGQGPDHTSGRIERFLQLWAEGSMTIAMPSTPANYFHLLRRHGKDGIQRPLIVFTPKSMLRNKAAVSDIRDFTESKFRSVLEEPMYTDGEGDRNKVTRLLLTSGKIYYELAARKAKENREDVAIVRIEQLAPLPRRRLAETLDRYPNVKEKFWVQEEPANQGAWPSFGLTLPEILPDHFTGLKRISRRAMSAPSSGSSKVHAVEQQEILDTAFG.

Positions 1 to 41 (MSSSPSPFGQNEWLVEEMYRKFRDDPSSVDPSWHEFLVDYS) are 2-oxoglutarate dehydrogenase E1, N-terminal part. A compositionally biased stretch (basic and acidic residues) spans 23–37 (RDDPSSVDPSWHEFL). The tract at residues 23-102 (RDDPSSVDPS…SATPAKGDES (80 aa)) is disordered. A linker region spans residues 42–88 (PEPTTDSASNGRTTTAAPVTPPTPAPAPAPEPKAAPKPAAKTEAKPA). Residues 43–53 (EPTTDSASNGR) show a composition bias toward polar residues. Positions 60–76 (VTPPTPAPAPAPEPKAA) are enriched in pro residues. Positions 88-97 (AKPAKSATPA) are enriched in low complexity. A succinyltransferase E2 region spans residues 89–335 (KPAKSATPAK…LRTIHQLLLD (247 aa)). The Proton acceptor; for succinyltransferase activity role is filled by histidine 314. The tract at residues 336–1227 (DDFFDEIFRE…QQEILDTAFG (892 aa)) is 2-oxoglutarate dehydrogenase E1, C-terminal part. Arginine 540 contacts thiamine diphosphate. 2-oxoglutarate contacts are provided by histidine 579 and serine 604. 6 residues coordinate thiamine diphosphate: serine 604, leucine 606, aspartate 645, alanine 646, alanine 647, and asparagine 678. Mg(2+) is bound at residue aspartate 645. Mg(2+) is bound by residues asparagine 678 and isoleucine 680. Positions 783–814 (DISMKEAEDALRDYQGQLERVFNEVRELEKHE) form a coiled coil. Position 1020 (histidine 1020) interacts with 2-oxoglutarate. Positions 1038, 1054, 1089, 1092, 1142, 1149, and 1150 each coordinate acetyl-CoA.

It belongs to the 2-oxoacid dehydrogenase family. Kgd subfamily. Homodimer. Interacts with the FHA domain of unphosphorylated GarA. The 2-oxoglutarate dehydrogenase (ODH) complex contains multiple copies of three enzymatic components: 2-oxoglutarate dehydrogenase (E1), dihydrolipoamide succinyltransferase (E2) and lipoamide dehydrogenase (E3). The cofactor is Mg(2+). It depends on thiamine diphosphate as a cofactor.

It carries out the reaction glyoxylate + 2-oxoglutarate + H(+) = 2-hydroxy-3-oxoadipate + CO2. The catalysed reaction is 2-oxoglutarate + H(+) = succinate semialdehyde + CO2. It catalyses the reaction N(6)-[(R)-lipoyl]-L-lysyl-[protein] + 2-oxoglutarate + H(+) = N(6)-[(R)-S(8)-succinyldihydrolipoyl]-L-lysyl-[protein] + CO2. The enzyme catalyses N(6)-[(R)-dihydrolipoyl]-L-lysyl-[protein] + succinyl-CoA = N(6)-[(R)-S(8)-succinyldihydrolipoyl]-L-lysyl-[protein] + CoA. It functions in the pathway carbohydrate metabolism; tricarboxylic acid cycle; succinate from 2-oxoglutarate (transferase route): step 1/2. Its pathway is carbohydrate metabolism; tricarboxylic acid cycle; succinyl-CoA from 2-oxoglutarate (dehydrogenase route): step 1/1. Its activity is regulated as follows. Alpha-ketoglutarate dehydrogenase and decarboxylase activities are inhibited by unphosphorylated GarA, and allosterically activated by acetyl-CoA, the main substrate of the TCA cycle. Both the phosphoadenosine and acetyl moieties of acetyl-CoA are important for activation because neither CoA nor the synthetic compound S-(2-acetamidoethyl)-ethanethioate (which mimics the terminal acetyl-phosphopantetheine group of acetyl-CoA) has an activation effect. Functionally, shows three enzymatic activities that share a first common step, the attack of thiamine-PP on 2-oxoglutarate (alpha-ketoglutarate, KG), leading to the formation of an enamine-thiamine-PP intermediate upon decarboxylation. Thus, displays KGD activity, catalyzing the decarboxylation from five-carbon 2-oxoglutarate to four-carbon succinate semialdehyde (SSA). Also catalyzes C-C bond formation between the activated aldehyde formed after decarboxylation of alpha-ketoglutarate and the carbonyl of glyoxylate (GLX), to yield 2-hydroxy-3-oxoadipate (HOA), which spontaneously decarboxylates to form 5-hydroxylevulinate (HLA). And is also a component of the 2-oxoglutarate dehydrogenase (ODH) complex, that catalyzes the overall conversion of 2-oxoglutarate to succinyl-CoA and CO(2). The KG decarboxylase and KG dehydrogenase reactions provide two alternative, tightly regulated, pathways connecting the oxidative and reductive branches of the TCA cycle. This is Multifunctional 2-oxoglutarate metabolism enzyme (kgd) from Mycolicibacterium smegmatis (strain ATCC 700084 / mc(2)155) (Mycobacterium smegmatis).